The sequence spans 393 residues: N-lysine methyltransferase KMT5A (393 aa).

The interval proline 68–valine 88 is disordered. Residues methionine 72–glycine 85 are compositionally biased toward basic and acidic residues. The residue at position 100 (serine 100) is a Phosphoserine. The stretch at arginine 134–glycine 163 forms a coiled coil. Residues lysine 135 to serine 241 form a disordered region. Residues methionine 150 to lysine 162 are compositionally biased toward basic and acidic residues. N6-acetyllysine is present on lysine 162. Threonine 181 is modified (phosphothreonine). The segment covering alanine 197–glutamine 213 has biased composition (basic residues). One can recognise an SET domain in the interval glutamate 257–glycine 378. S-adenosyl-L-methionine is bound by residues lysine 267–arginine 269, tyrosine 312, and asparagine 339–histidine 340.

This sequence belongs to the class V-like SAM-binding methyltransferase superfamily. Histone-lysine methyltransferase family. PR/SET subfamily. Interacts with L3MBTL1. As to quaternary structure, interacts with SIRT2 (phosphorylated form); the interaction is direct, stimulates KMT5A-mediated methyltransferase activity at histone H4 'Lys-20' (H4K20me1) and is increased in a H(2)O(2)-induced oxidative stress-dependent manner. Acetylated at Lys-162; does not affect methyltransferase activity. Deacetylated at Lys-162 possibly by SIRT2; does not change methyltransferase activity. In terms of processing, ubiquitinated and degraded by the DCX(DTL) complex.

The protein localises to the nucleus. The protein resides in the chromosome. The enzyme catalyses L-lysyl(20)-[histone H4] + S-adenosyl-L-methionine = N(6)-methyl-L-lysyl(20)-[histone H4] + S-adenosyl-L-homocysteine + H(+). It carries out the reaction L-lysyl-[protein] + S-adenosyl-L-methionine = N(6)-methyl-L-lysyl-[protein] + S-adenosyl-L-homocysteine + H(+). In terms of biological role, protein-lysine N-methyltransferase that monomethylates both histones and non-histone proteins. Specifically monomethylates 'Lys-20' of histone H4 (H4K20me1). H4K20me1 is enriched during mitosis and represents a specific tag for epigenetic transcriptional repression. Mainly functions in euchromatin regions, thereby playing a central role in the silencing of euchromatic genes. Required for cell proliferation, probably by contributing to the maintenance of proper higher-order structure of DNA during mitosis. Involved in chromosome condensation and proper cytokinesis. Nucleosomes are preferred as substrate compared to free histones. Mediates monomethylation of p53/TP53 at 'Lys-382', leading to repress p53/TP53-target genes. Plays a negative role in TGF-beta response regulation and a positive role in cell migration. This chain is N-lysine methyltransferase KMT5A, found in Homo sapiens (Human).